The following is a 473-amino-acid chain: Bifunctional protein HldE (473 aa).

Positions 1–317 (MTHGLPHFTS…LQQALHPRAI (317 aa)) are ribokinase. Residue 195 to 198 (NLAE) participates in ATP binding. Residue aspartate 264 is part of the active site. A cytidylyltransferase region spans residues 343-473 (MTNGCFDILH…SQIIDIIRKN (131 aa)).

This sequence in the N-terminal section; belongs to the carbohydrate kinase PfkB family. It in the C-terminal section; belongs to the cytidylyltransferase family. In terms of assembly, homodimer.

It carries out the reaction D-glycero-beta-D-manno-heptose 7-phosphate + ATP = D-glycero-beta-D-manno-heptose 1,7-bisphosphate + ADP + H(+). The catalysed reaction is D-glycero-beta-D-manno-heptose 1-phosphate + ATP + H(+) = ADP-D-glycero-beta-D-manno-heptose + diphosphate. It participates in nucleotide-sugar biosynthesis; ADP-L-glycero-beta-D-manno-heptose biosynthesis; ADP-L-glycero-beta-D-manno-heptose from D-glycero-beta-D-manno-heptose 7-phosphate: step 1/4. It functions in the pathway nucleotide-sugar biosynthesis; ADP-L-glycero-beta-D-manno-heptose biosynthesis; ADP-L-glycero-beta-D-manno-heptose from D-glycero-beta-D-manno-heptose 7-phosphate: step 3/4. Catalyzes the phosphorylation of D-glycero-D-manno-heptose 7-phosphate at the C-1 position to selectively form D-glycero-beta-D-manno-heptose-1,7-bisphosphate. Functionally, catalyzes the ADP transfer from ATP to D-glycero-beta-D-manno-heptose 1-phosphate, yielding ADP-D-glycero-beta-D-manno-heptose. The polypeptide is Bifunctional protein HldE (Nitrosococcus oceani (strain ATCC 19707 / BCRC 17464 / JCM 30415 / NCIMB 11848 / C-107)).